Consider the following 432-residue polypeptide: Hexane cyclase pydB (432 aa).

The N-terminal stretch at 1–20 (MMHQSLGLGLVVFVAAPVVA) is a signal peptide. Residues N59, N78, N153, and N308 are each glycosylated (N-linked (GlcNAc...) asparagine).

The protein belongs to the Diels-Alderase family.

Its pathway is mycotoxin biosynthesis. Hexane cyclase; part of the gene cluster that mediates the biosynthesis of pyrrocidines, fungal natural products containing a macrocyclic para-cyclophane connected to a decahydrofluorene ring system that show potent antibiotic activities toward Gram-negative bacteria. Within the pathway, pydB functions synergistically with pydE, pydX and pydZ to form the cyclophane. The pathway begins with the PKS-NRPS pydA which, with the help of the trans-enoyl reductase pydC, synthesizes the polyketide-tyrosyl acyl thioester product which can be reductively off-loaded by the terminal reductase (R) domain in pydA. The alpha/beta hydrolase pydG is then required to catalyze the subsequent Knoevenagel condensation that affords the 3-pyrrolin-2-one ring, whereas the four proteins pydB, pydE, pydX and pydZ then function synergistically to form the cyclophane. PydB and the membrane-bound pydX and pydZ are lipid-binding proteins that can sequester and mold the pdyG product into the inverse S-shape. Binding of the medium chain reductase pydE to the complex would trigger the cascade oxidative cyclization. PydY is involved the Diels-Alder cycloaddition that forms the decahydrofluorene core. Additional non-enzymatic hydroxylation yields pyrrocidine A2 which can be further reduced into pyrrocidine B by an endogenous reductase. This is Hexane cyclase pydB from Acremonium sp.